Consider the following 78-residue polypeptide: Large ribosomal subunit protein bL28 (78 aa).

This sequence belongs to the bacterial ribosomal protein bL28 family.

The polypeptide is Large ribosomal subunit protein bL28 (Legionella pneumophila (strain Paris)).